Consider the following 481-residue polypeptide: MSVTKSAGSPQVAATVKLDLVSFPESAKKVQSQDPNPVNGSSSESSEKTKGITGFQTLVHLVKGNMGTGILGLPLAVKNAGILMGPLSLLVMGLIACHCMHILVRCAQRFCHRLNKPFMDYGDTVMHGLASSPNTWLQSHAHWGRHAVSFFLIVTQLGFCCVYIVFLADNLKQVVEAVNSTTISCHKNETVVLTPTIDSRLYMLAFLPVLGLLVFIRNLRVLTIFSLLANVSMLVSLVIIGQYIIQGIPDPSQLPLVASWKTYPLFFGTAIFSFESIGVVLPLENKMKDARRFPTILSLGMSIITTLYIAIGALGYLRFGDDIKASITLNLPNCWLYQSVKLLYVVGILCTHALQFYVPAEIIIPLAVSQVSKRWALPVDLSIRLALVCVTCMLAILIPRLDLVLSLVGSVSSSALALIIPPLLEVTTYYGEGMSPLTITKDALISILGFMGFVVGTYQALDELIRSGNSLPLSNSTMFIQ.

The Cytoplasmic portion of the chain corresponds to 1-56 (MSVTKSAGSPQVAATVKLDLVSFPESAKKVQSQDPNPVNGSSSESSEKTKGITGFQ). The interval 26 to 49 (SAKKVQSQDPNPVNGSSSESSEKT) is disordered. A compositionally biased stretch (polar residues) spans 29–40 (KVQSQDPNPVNG). The chain crosses the membrane as a helical span at residues 57–77 (TLVHLVKGNMGTGILGLPLAV). Residues 78–79 (KN) are Extracellular-facing. Residues 80–100 (AGILMGPLSLLVMGLIACHCM) traverse the membrane as a helical segment. At 101 to 146 (HILVRCAQRFCHRLNKPFMDYGDTVMHGLASSPNTWLQSHAHWGRH) the chain is on the cytoplasmic side. The helical transmembrane segment at 147–167 (AVSFFLIVTQLGFCCVYIVFL) threads the bilayer. Topologically, residues 168–195 (ADNLKQVVEAVNSTTISCHKNETVVLTP) are extracellular. A helical membrane pass occupies residues 196–216 (TIDSRLYMLAFLPVLGLLVFI). The Cytoplasmic portion of the chain corresponds to 217–220 (RNLR). Residues 221-241 (VLTIFSLLANVSMLVSLVIIG) traverse the membrane as a helical segment. Residues 242-262 (QYIIQGIPDPSQLPLVASWKT) lie on the Extracellular side of the membrane. The chain crosses the membrane as a helical span at residues 263–283 (YPLFFGTAIFSFESIGVVLPL). Topologically, residues 284–295 (ENKMKDARRFPT) are cytoplasmic. Residues 296 to 316 (ILSLGMSIITTLYIAIGALGY) form a helical membrane-spanning segment. At 317–343 (LRFGDDIKASITLNLPNCWLYQSVKLL) the chain is on the extracellular side. Residues 344–364 (YVVGILCTHALQFYVPAEIII) form a helical membrane-spanning segment. The Cytoplasmic segment spans residues 365–377 (PLAVSQVSKRWAL). Residues 378 to 398 (PVDLSIRLALVCVTCMLAILI) traverse the membrane as a helical segment. Over 399 to 402 (PRLD) the chain is Extracellular. Residues 403 to 423 (LVLSLVGSVSSSALALIIPPL) traverse the membrane as a helical segment. The Cytoplasmic segment spans residues 424-444 (LEVTTYYGEGMSPLTITKDAL). The helical transmembrane segment at 445-465 (ISILGFMGFVVGTYQALDELI) threads the bilayer. Over 466–481 (RSGNSLPLSNSTMFIQ) the chain is Extracellular.

Belongs to the amino acid/polyamine transporter 2 family. As to expression, expressed in lung and spleen, and to a lower extent in brain, heart, kidney and skeletal muscle.

The protein resides in the cell membrane. Its subcellular location is the endoplasmic reticulum membrane. It localises to the recycling endosome membrane. It carries out the reaction glycine(in) + H(+)(in) = glycine(out) + H(+)(out). The catalysed reaction is L-alanine(in) + H(+)(in) = L-alanine(out) + H(+)(out). It catalyses the reaction D-alanine(in) + H(+)(in) = D-alanine(out) + H(+)(out). The enzyme catalyses L-proline(out) + H(+)(out) = L-proline(in) + H(+)(in). It carries out the reaction D-proline(out) + H(+)(out) = D-proline(in) + H(+)(in). The catalysed reaction is 4-hydroxy-L-proline(in) + H(+)(in) = 4-hydroxy-L-proline(out) + H(+)(out). It catalyses the reaction L-serine(in) + H(+)(in) = L-serine(out) + H(+)(out). The enzyme catalyses D-serine(out) + H(+)(out) = D-serine(in) + H(+)(in). It carries out the reaction beta-alanine(in) + H(+)(in) = beta-alanine(out) + H(+)(out). The catalysed reaction is 4-aminobutanoate(in) + H(+)(in) = 4-aminobutanoate(out) + H(+)(out). It catalyses the reaction sarcosine(in) + H(+)(in) = sarcosine(out) + H(+)(out). The enzyme catalyses N,N-dimethylglycine(in) + H(+)(in) = N,N-dimethylglycine(out) + H(+)(out). With respect to regulation, inhibited by L- and D-pipecolic acid, nipecotic acid, isonipecotic acid, L- and D-cycloserine, and L-2-azetidine-carboxylate. Its function is as follows. Electrogenic proton/amino acid symporter with a high selectivity for the small side chains amino acids glycine, alanine and proline, where both L- and D-enantiomers are transported. Extension of the backbone length, as in beta-alanine and 4-aminobutanoate or methylation of the amino group, as in sarcosine and N,N-dimethylglycine, are also tolerated but decrease transport efficiency. A free carboxyl group is preferred. This is Proton-coupled amino acid transporter 2 from Rattus norvegicus (Rat).